Here is a 716-residue protein sequence, read N- to C-terminus: DNA ligase (716 aa).

NAD(+)-binding positions include 42-46 (DAEYD), 91-92 (SL), and E125. Catalysis depends on K127, which acts as the N6-AMP-lysine intermediate. Residues R148, E184, K300, and K324 each contribute to the NAD(+) site. Residues C429, C432, C447, and C453 each contribute to the Zn(2+) site. One can recognise a BRCT domain in the interval 638–716 (TASSPIAGKI…EEAWLQLIEG (79 aa)).

Belongs to the NAD-dependent DNA ligase family. LigA subfamily. The cofactor is Mg(2+). Requires Mn(2+) as cofactor.

The catalysed reaction is NAD(+) + (deoxyribonucleotide)n-3'-hydroxyl + 5'-phospho-(deoxyribonucleotide)m = (deoxyribonucleotide)n+m + AMP + beta-nicotinamide D-nucleotide.. In terms of biological role, DNA ligase that catalyzes the formation of phosphodiester linkages between 5'-phosphoryl and 3'-hydroxyl groups in double-stranded DNA using NAD as a coenzyme and as the energy source for the reaction. It is essential for DNA replication and repair of damaged DNA. In Bartonella henselae (strain ATCC 49882 / DSM 28221 / CCUG 30454 / Houston 1) (Rochalimaea henselae), this protein is DNA ligase.